Consider the following 229-residue polypeptide: Biosynthetic peptidoglycan transglycosylase (229 aa).

A helical membrane pass occupies residues 11-31 (NLLLALFLVLVAGPVVAVILY).

It belongs to the glycosyltransferase 51 family.

The protein localises to the cell inner membrane. The catalysed reaction is [GlcNAc-(1-&gt;4)-Mur2Ac(oyl-L-Ala-gamma-D-Glu-L-Lys-D-Ala-D-Ala)](n)-di-trans,octa-cis-undecaprenyl diphosphate + beta-D-GlcNAc-(1-&gt;4)-Mur2Ac(oyl-L-Ala-gamma-D-Glu-L-Lys-D-Ala-D-Ala)-di-trans,octa-cis-undecaprenyl diphosphate = [GlcNAc-(1-&gt;4)-Mur2Ac(oyl-L-Ala-gamma-D-Glu-L-Lys-D-Ala-D-Ala)](n+1)-di-trans,octa-cis-undecaprenyl diphosphate + di-trans,octa-cis-undecaprenyl diphosphate + H(+). Its pathway is cell wall biogenesis; peptidoglycan biosynthesis. Peptidoglycan polymerase that catalyzes glycan chain elongation from lipid-linked precursors. The polypeptide is Biosynthetic peptidoglycan transglycosylase (Caulobacter vibrioides (strain ATCC 19089 / CIP 103742 / CB 15) (Caulobacter crescentus)).